The chain runs to 396 residues: DNA-directed RNA polymerase subunit 6 (396 aa).

Disordered regions lie at residues 1–137 and 290–396; these read MSSK…DIED and NQQK…DYSE. Acidic residues-rich tracts occupy residues 21-53, 76-88, and 97-137; these read EYYD…DDEN, IDPD…DTDG, and EMGE…DIED. Polar residues predominate over residues 290–312; sequence NQQKNSTTDTETLSTQENASTRV. Low complexity-rich tracts occupy residues 313-338 and 346-366; these read SGSN…SKSN and NSRT…SRTG. Over residues 367-380 the composition is skewed to basic residues; sequence SKSKKSSNTKSKSK. A compositionally biased stretch (acidic residues) spans 385–396; it reads NSDDSDYSDYSE.

Belongs to the archaeal Rpo6/eukaryotic RPB6 RNA polymerase subunit family.

It carries out the reaction RNA(n) + a ribonucleoside 5'-triphosphate = RNA(n+1) + diphosphate. Functionally, DNA-dependent RNA polymerase catalyzes the transcription of DNA into RNA using the four ribonucleoside triphosphates as substrates. This Acanthamoeba polyphaga (Amoeba) protein is DNA-directed RNA polymerase subunit 6.